A 214-amino-acid chain; its full sequence is MALSEAAKQVQTALLERGLETPMVPCGLSSEARKEKIEHHMREILTLMSLDLRDDSLVETPKRIAKMYVDEIFSGLDYENFPKITVIENKMGFDEMVKVNDISLTSTCEHHLVTIDGVATVAYLPRKNIIGLSKINRIVRFFAQRPQVQERLTQQVLVALQTLLETKDVAVKMDAVHYCVKSRGVMDSTSTTTTTALGGIFKSNPATRAEFLSN.

Zn(2+) is bound by residues C108, H111, and C179.

This sequence belongs to the GTP cyclohydrolase I family. Toroid-shaped homodecamer, composed of two pentamers of five dimers.

The enzyme catalyses GTP + H2O = 7,8-dihydroneopterin 3'-triphosphate + formate + H(+). Its pathway is cofactor biosynthesis; 7,8-dihydroneopterin triphosphate biosynthesis; 7,8-dihydroneopterin triphosphate from GTP: step 1/1. This is GTP cyclohydrolase 1 from Shewanella loihica (strain ATCC BAA-1088 / PV-4).